A 363-amino-acid polypeptide reads, in one-letter code: Ethanolamine kinase 1 (363 aa).

The protein belongs to the choline/ethanolamine kinase family.

It is found in the cytoplasm. The enzyme catalyses ethanolamine + ATP = phosphoethanolamine + ADP + H(+). Its pathway is phospholipid metabolism; phosphatidylethanolamine biosynthesis; phosphatidylethanolamine from ethanolamine: step 1/3. Highly specific for ethanolamine phosphorylation. May be a rate-controlling step in phosphatidylethanolamine biosynthesis. This is Ethanolamine kinase 1 (Etnk1) from Mus musculus (Mouse).